Here is a 239-residue protein sequence, read N- to C-terminus: Serine protease SplF (239 aa).

The N-terminal stretch at 1–36 is a signal peptide; the sequence is MNKNIIIKSIGALTILTSITGVGTTMVEGIQQTAKA. Catalysis depends on charge relay system residues His-75, Asp-114, and Ser-192.

This sequence belongs to the peptidase S1B family.

It is found in the secreted. The protein is Serine protease SplF (splF) of Staphylococcus aureus (strain USA300).